Reading from the N-terminus, the 33-residue chain is Nigrocin-1 (33 aa).

Cysteines 27 and 33 form a disulfide.

This sequence belongs to the frog skin active peptide (FSAP) family. Brevinin subfamily. As to expression, expressed by the skin dorsal glands.

Its subcellular location is the secreted. Its function is as follows. Shows antibacterial activity against both Gram-positive and Gram-negative bacteria and against the fungus C.albicans. Has no hemolytic activity. This Pelophylax nigromaculatus (Black-spotted frog) protein is Nigrocin-1.